Here is a 245-residue protein sequence, read N- to C-terminus: MALLPVLLFLAAVLLPFFPASGQDPGFAALSITKSEVQKEIVNKHNDLRRTVSPLASNMLKMQWDSKTATNAQNWANKCLLQHSKAEDRAVGTMKCGENLFMSSIPNSWSDAIQNWHDEVHDFKYGVGPKTPNAVVGHYTQVVWYSSYRVGCGIAYCPKQGTLKYYYVCQYCPAGNYVNKINTPYEQGTPCARCPGNCDNGLCTNSCEYEDLVSNCDSLKKIAGCEHELLKENCKTTCQCENKIY.

Positions 1–22 are cleaved as a signal peptide; sequence MALLPVLLFLAAVLLPFFPASG. In terms of domain architecture, SCP spans 42 to 171; sequence VNKHNDLRRT…TLKYYYVCQY (130 aa). 5 cysteine pairs are disulfide-bonded: cysteine 191/cysteine 198, cysteine 194/cysteine 203, cysteine 207/cysteine 240, cysteine 216/cysteine 234, and cysteine 225/cysteine 238. The 34-residue stretch at 207–240 folds into the ShKT domain; it reads CEYEDLVSNCDSLKKIAGCEHELLKENCKTTCQC.

This sequence belongs to the CRISP family. Interacts with A1BG. In terms of tissue distribution, expressed in the salivary gland, in the ampulla and the seminal vesicle.

The protein localises to the secreted. This chain is Cysteine-rich secretory protein 3 (CRISP3), found in Equus caballus (Horse).